Here is a 249-residue protein sequence, read N- to C-terminus: 3-deoxy-manno-octulosonate cytidylyltransferase (249 aa).

It belongs to the KdsB family.

The protein resides in the cytoplasm. The catalysed reaction is 3-deoxy-alpha-D-manno-oct-2-ulosonate + CTP = CMP-3-deoxy-beta-D-manno-octulosonate + diphosphate. It functions in the pathway nucleotide-sugar biosynthesis; CMP-3-deoxy-D-manno-octulosonate biosynthesis; CMP-3-deoxy-D-manno-octulosonate from 3-deoxy-D-manno-octulosonate and CTP: step 1/1. The protein operates within bacterial outer membrane biogenesis; lipopolysaccharide biosynthesis. Its function is as follows. Activates KDO (a required 8-carbon sugar) for incorporation into bacterial lipopolysaccharide in Gram-negative bacteria. The sequence is that of 3-deoxy-manno-octulosonate cytidylyltransferase from Coxiella burnetii (strain CbuG_Q212) (Coxiella burnetii (strain Q212)).